Consider the following 936-residue polypeptide: ATP-dependent RNA helicase dbp10 (936 aa).

The tract at residues 1–48 is disordered; it reads MPSRAASPALSENEFDITGALFQNDSDSDAETQKPTKRKKVPAAPNVN. A Q motif motif is present at residues 91–119; it reads GGFQAMGLNANLLKAIARKGFSVPTPIQR. One can recognise a Helicase ATP-binding domain in the interval 122–294; it reads IPVIMEDQDV…RAGLQDPTLV (173 aa). ATP is bound at residue 135 to 142; the sequence is ARTGSGKT. The DEAD box motif lies at 242–245; that stretch reads DEAD. Disordered regions lie at residues 337–363, 642–684, 701–721, and 843–936; these read TEASLRLKEKGPEDSKNKKRKRAEMER, EAKK…PDNM, TTDKASKSNSNSKSDSTPTTL, and TPGL…SRKK. Basic and acidic residues predominate over residues 341 to 352; that stretch reads LRLKEKGPEDSK. Positions 360–511 constitute a Helicase C-terminal domain; that stretch reads EMERAVNMKE…SDQVNFAEDV (152 aa). Acidic residues predominate over residues 663-675; that stretch reads AEVDGDAFSDLEG. The segment covering 701-717 has biased composition (low complexity); sequence TTDKASKSNSNSKSDST. A compositionally biased stretch (basic and acidic residues) spans 867–895; sequence EKAPKAADPLRGDYEKMKKKAEAARERAA. A compositionally biased stretch (low complexity) spans 896-906; sequence SKVGGVTSGGK. Positions 907–916 are enriched in basic and acidic residues; the sequence is SEIRNTDDIR. Over residues 917-936 the composition is skewed to basic residues; the sequence is KARKLKQKRREKNARPSRKK.

This sequence belongs to the DEAD box helicase family. DDX54/DBP10 subfamily.

Its subcellular location is the nucleus. The protein resides in the nucleolus. It carries out the reaction ATP + H2O = ADP + phosphate + H(+). In terms of biological role, ATP-binding RNA helicase involved in the biogenesis of 60S ribosomal subunits and is required for the normal formation of 25S and 5.8S rRNAs. The protein is ATP-dependent RNA helicase dbp10 (dbp10) of Emericella nidulans (strain FGSC A4 / ATCC 38163 / CBS 112.46 / NRRL 194 / M139) (Aspergillus nidulans).